The following is a 236-amino-acid chain: Small ribosomal subunit protein uS3 (236 aa).

The KH type-2 domain maps to 39–107 (VREFLKKKLA…PVHLNIEEVR (69 aa)). A disordered region spans residues 215-236 (AAQPAEPEKKVRKSGAKNAATS).

The protein belongs to the universal ribosomal protein uS3 family. As to quaternary structure, part of the 30S ribosomal subunit. Forms a tight complex with proteins S10 and S14.

Binds the lower part of the 30S subunit head. Binds mRNA in the 70S ribosome, positioning it for translation. This is Small ribosomal subunit protein uS3 from Methylobacillus flagellatus (strain ATCC 51484 / DSM 6875 / VKM B-1610 / KT).